The primary structure comprises 272 residues: Alkaline ceramidase (272 aa).

A run of 2 helical transmembrane segments spans residues 34-54 (FANT…IMLL) and 61-81 (VNGG…ASTY). Histidine 83 provides a ligand contact to Zn(2+). 4 consecutive transmembrane segments (helical) span residues 96–116 (LSLV…MKWF), 124–144 (LTVV…LCFL), 148–168 (LNAI…RYEG), and 183–203 (ILAL…LCDF). Histidine 213 and histidine 217 together coordinate Zn(2+). The chain crosses the membrane as a helical span at residues 214–234 (ALFHLLAGLAGYTIFIMFSMI). An N-linked (GlcNAc...) asparagine glycan is attached at asparagine 256.

This sequence belongs to the alkaline ceramidase family. The cofactor is Zn(2+).

The protein resides in the membrane. It carries out the reaction an N-acylsphing-4-enine + H2O = sphing-4-enine + a fatty acid. Hydrolyzes the sphingolipid ceramide into sphingosine and free fatty acid. The protein is Alkaline ceramidase of Caenorhabditis briggsae.